The sequence spans 388 residues: Chorismate synthase (388 aa).

2 residues coordinate NADP(+): arginine 39 and arginine 45. Residues 95–115 are disordered; it reads EKQKKIRRVSKPRPGHADLVG. The span at 98–108 shows a compositional bias: basic residues; that stretch reads KKIRRVSKPRP. FMN-binding positions include 130–132, 251–252, glycine 296, 311–315, and arginine 337; these read RSS, NA, and KPIPT.

Belongs to the chorismate synthase family. Homotetramer. The cofactor is FMNH2.

The enzyme catalyses 5-O-(1-carboxyvinyl)-3-phosphoshikimate = chorismate + phosphate. It functions in the pathway metabolic intermediate biosynthesis; chorismate biosynthesis; chorismate from D-erythrose 4-phosphate and phosphoenolpyruvate: step 7/7. Functionally, catalyzes the anti-1,4-elimination of the C-3 phosphate and the C-6 proR hydrogen from 5-enolpyruvylshikimate-3-phosphate (EPSP) to yield chorismate, which is the branch point compound that serves as the starting substrate for the three terminal pathways of aromatic amino acid biosynthesis. This reaction introduces a second double bond into the aromatic ring system. This chain is Chorismate synthase, found in Enterococcus faecalis (strain ATCC 700802 / V583).